The chain runs to 150 residues: MKVIFLQDVKGKGKKGEVKEVPTGYAQNFLLKKNLAKEATTQAIGELKGKQKSEEKAQAEILAQAKELKTQLESETTRVQFIEKVGPDGRTFGSITAKKIAEELQKQYGIKIDKRHIDLDHTIRAIGKVEVPVKLHKQVSSQIKLDIKEA.

The protein belongs to the bacterial ribosomal protein bL9 family.

Functionally, binds to the 23S rRNA. The chain is Large ribosomal subunit protein bL9 from Streptococcus agalactiae serotype III (strain NEM316).